We begin with the raw amino-acid sequence, 71 residues long: Small ribosomal subunit protein bS21 (71 aa).

The protein belongs to the bacterial ribosomal protein bS21 family.

This chain is Small ribosomal subunit protein bS21, found in Dichelobacter nodosus (strain VCS1703A).